Consider the following 470-residue polypeptide: ATP synthase subunit beta (470 aa).

155-162 (GGAGVGKT) lines the ATP pocket.

Belongs to the ATPase alpha/beta chains family. In terms of assembly, F-type ATPases have 2 components, CF(1) - the catalytic core - and CF(0) - the membrane proton channel. CF(1) has five subunits: alpha(3), beta(3), gamma(1), delta(1), epsilon(1). CF(0) has three main subunits: a(1), b(2) and c(9-12). The alpha and beta chains form an alternating ring which encloses part of the gamma chain. CF(1) is attached to CF(0) by a central stalk formed by the gamma and epsilon chains, while a peripheral stalk is formed by the delta and b chains.

It localises to the cell membrane. It catalyses the reaction ATP + H2O + 4 H(+)(in) = ADP + phosphate + 5 H(+)(out). In terms of biological role, produces ATP from ADP in the presence of a proton gradient across the membrane. The catalytic sites are hosted primarily by the beta subunits. This Staphylococcus saprophyticus subsp. saprophyticus (strain ATCC 15305 / DSM 20229 / NCIMB 8711 / NCTC 7292 / S-41) protein is ATP synthase subunit beta.